A 216-amino-acid chain; its full sequence is Large ribosomal subunit protein uL3 (216 aa).

Gln-157 carries the post-translational modification N5-methylglutamine.

Belongs to the universal ribosomal protein uL3 family. As to quaternary structure, part of the 50S ribosomal subunit. Forms a cluster with proteins L14 and L19. Post-translationally, methylated by PrmB.

Functionally, one of the primary rRNA binding proteins, it binds directly near the 3'-end of the 23S rRNA, where it nucleates assembly of the 50S subunit. This Xanthomonas axonopodis pv. citri (strain 306) protein is Large ribosomal subunit protein uL3.